Reading from the N-terminus, the 137-residue chain is Probable calcium-binding protein CML33 (137 aa).

4 consecutive EF-hand domains span residues 1 to 36, 37 to 72, 76 to 111, and 112 to 137; these read MNNM…LSPS, IPSE…TAQS, DVEK…LGEK, and CTVE…FVGV. The Ca(2+) site is built by Asp14, Ser16, Asp18, Lys20, and Glu25. Ca(2+) is bound by residues Asp89, Asn91, Asp93, Lys95, and Glu100.

Potential calcium sensor. The sequence is that of Probable calcium-binding protein CML33 (CML33) from Arabidopsis thaliana (Mouse-ear cress).